A 432-amino-acid chain; its full sequence is Adenylosuccinate synthetase (432 aa).

GTP-binding positions include 12-18 (GDEGKGK) and 40-42 (GHT). Asp13 serves as the catalytic Proton acceptor. Positions 13 and 40 each coordinate Mg(2+). Residues 13–16 (DEGK), 38–41 (NAGH), Thr130, Arg144, Gln225, Thr240, and Arg304 contribute to the IMP site. Residue His41 is the Proton donor of the active site. Residue 300–306 (STTGRPR) participates in substrate binding. GTP-binding positions include Arg306, 332–334 (KLD), and 414–416 (SVG).

It belongs to the adenylosuccinate synthetase family. Homodimer. Requires Mg(2+) as cofactor.

It is found in the cytoplasm. It carries out the reaction IMP + L-aspartate + GTP = N(6)-(1,2-dicarboxyethyl)-AMP + GDP + phosphate + 2 H(+). It functions in the pathway purine metabolism; AMP biosynthesis via de novo pathway; AMP from IMP: step 1/2. In terms of biological role, plays an important role in the de novo pathway of purine nucleotide biosynthesis. Catalyzes the first committed step in the biosynthesis of AMP from IMP. This chain is Adenylosuccinate synthetase, found in Citrifermentans bemidjiense (strain ATCC BAA-1014 / DSM 16622 / JCM 12645 / Bem) (Geobacter bemidjiensis).